A 377-amino-acid chain; its full sequence is MIRGNDPILLTPGPLTTSLATKQAMLRDWGSWDAAFNAITRSLCDDLVRIVHGEGTHVCVPMQGSGTFSVEAAIANVVPRDGKVLVPQNGAYCQRILKICKVLGRASVELPIPEDQPATAALIEEAIRRDPSITHVAQVHCETGAGVLNPLQEIAALCQRLGKGLIVDAMSSFGAIEIDARTMPFDALVAATGKCIEGVPGMGFVLVKKDVLEASQGNSHSLALDLYDQYVYMQKTTQWRFTPPTHVVAAFRTALDQFLEEGGQPVRGARYRRNCDALVQGMAALGFRAFLPAAVQAPIIVTFHAPADARYDFKTFYARVRERGYILYPGKLTQMETFRVGCIGAIDDNEMRNVVTAIGEVLREMGIKMQAPLAEAA.

Residue Lys-194 is modified to N6-(pyridoxal phosphate)lysine.

This sequence belongs to the class-V pyridoxal-phosphate-dependent aminotransferase family. PhnW subfamily. Homodimer. Requires pyridoxal 5'-phosphate as cofactor.

The enzyme catalyses (2-aminoethyl)phosphonate + pyruvate = phosphonoacetaldehyde + L-alanine. In terms of biological role, involved in phosphonate degradation. The polypeptide is 2-aminoethylphosphonate--pyruvate transaminase (Cupriavidus necator (strain ATCC 17699 / DSM 428 / KCTC 22496 / NCIMB 10442 / H16 / Stanier 337) (Ralstonia eutropha)).